We begin with the raw amino-acid sequence, 573 residues long: 2-succinyl-5-enolpyruvyl-6-hydroxy-3-cyclohexene-1-carboxylate synthase (573 aa).

This sequence belongs to the TPP enzyme family. MenD subfamily. Homodimer. It depends on Mg(2+) as a cofactor. Mn(2+) is required as a cofactor. The cofactor is thiamine diphosphate.

The catalysed reaction is isochorismate + 2-oxoglutarate + H(+) = 5-enolpyruvoyl-6-hydroxy-2-succinyl-cyclohex-3-ene-1-carboxylate + CO2. Its pathway is quinol/quinone metabolism; 1,4-dihydroxy-2-naphthoate biosynthesis; 1,4-dihydroxy-2-naphthoate from chorismate: step 2/7. The protein operates within quinol/quinone metabolism; menaquinone biosynthesis. In terms of biological role, catalyzes the thiamine diphosphate-dependent decarboxylation of 2-oxoglutarate and the subsequent addition of the resulting succinic semialdehyde-thiamine pyrophosphate anion to isochorismate to yield 2-succinyl-5-enolpyruvyl-6-hydroxy-3-cyclohexene-1-carboxylate (SEPHCHC). The polypeptide is 2-succinyl-5-enolpyruvyl-6-hydroxy-3-cyclohexene-1-carboxylate synthase (Shewanella putrefaciens (strain CN-32 / ATCC BAA-453)).